The primary structure comprises 275 residues: Large ribosomal subunit protein uL2 (275 aa).

Disordered regions lie at residues 24-48 and 224-264; these read LTTD…NAGD and VMNP…NKRT. The span at 31–42 shows a compositional bias: basic residues; it reads KPLTKTKQRTGG.

This sequence belongs to the universal ribosomal protein uL2 family. Part of the 50S ribosomal subunit. Forms a bridge to the 30S subunit in the 70S ribosome.

In terms of biological role, one of the primary rRNA binding proteins. Required for association of the 30S and 50S subunits to form the 70S ribosome, for tRNA binding and peptide bond formation. It has been suggested to have peptidyltransferase activity; this is somewhat controversial. Makes several contacts with the 16S rRNA in the 70S ribosome. The polypeptide is Large ribosomal subunit protein uL2 (Koribacter versatilis (strain Ellin345)).